A 528-amino-acid chain; its full sequence is NAD(P)H-quinone oxidoreductase chain 4 1 (528 aa).

The next 14 membrane-spanning stretches (helical) occupy residues Phe-7–Ile-27, Trp-32–Phe-52, Leu-86–Trp-106, Leu-114–Asp-134, Leu-136–Trp-156, Phe-168–Phe-188, Ala-208–Phe-228, Ser-242–Ile-262, Phe-276–Phe-296, Ile-310–Gly-330, Ala-331–Ile-351, Phe-375–Val-395, Gly-417–Leu-437, and Met-463–Ala-483.

This sequence belongs to the complex I subunit 4 family.

It is found in the cellular thylakoid membrane. It catalyses the reaction a plastoquinone + NADH + (n+1) H(+)(in) = a plastoquinol + NAD(+) + n H(+)(out). The catalysed reaction is a plastoquinone + NADPH + (n+1) H(+)(in) = a plastoquinol + NADP(+) + n H(+)(out). In terms of biological role, NDH-1 shuttles electrons from NAD(P)H, via FMN and iron-sulfur (Fe-S) centers, to quinones in the respiratory chain. The immediate electron acceptor for the enzyme in this species is believed to be plastoquinone. Couples the redox reaction to proton translocation (for every two electrons transferred, four hydrogen ions are translocated across the cytoplasmic membrane), and thus conserves the redox energy in a proton gradient. This is NAD(P)H-quinone oxidoreductase chain 4 1 from Synechococcus sp. (strain JA-2-3B'a(2-13)) (Cyanobacteria bacterium Yellowstone B-Prime).